We begin with the raw amino-acid sequence, 413 residues long: 5'-deoxyadenosine deaminase (413 aa).

Zn(2+) contacts are provided by H57 and H59. Substrate is bound by residues E86 and H171. Residue H198 participates in Zn(2+) binding. Residues E201 and D286 each coordinate substrate. D286 lines the Zn(2+) pocket.

This sequence belongs to the metallo-dependent hydrolases superfamily. MTA/SAH deaminase family. Homotetramer. The cofactor is Zn(2+).

It carries out the reaction 5'-deoxyadenosine + H2O + H(+) = 5'-deoxyinosine + NH4(+). The enzyme catalyses S-adenosyl-L-homocysteine + H2O + H(+) = S-inosyl-L-homocysteine + NH4(+). The catalysed reaction is S-methyl-5'-thioadenosine + H2O + H(+) = S-methyl-5'-thioinosine + NH4(+). It catalyses the reaction adenosine + H2O + H(+) = inosine + NH4(+). The protein operates within amino-acid biosynthesis; S-adenosyl-L-methionine biosynthesis. Its function is as follows. Catalyzes the deamination of three SAM-derived enzymatic products, namely 5'-deoxyadenosine, S-adenosyl-L-homocysteine, and 5'-methylthioadenosine, to produce the inosine analogs. Can also deaminate adenosine. The preferred substrate for this enzyme is 5'-deoxyadenosine, but all these substrates are efficiently deaminated. Likely functions in a S-adenosyl-L-methionine (SAM) recycling pathway from S-adenosyl-L-homocysteine (SAH) produced from SAM-dependent methylation reactions. May also be involved in the recycling of 5'-deoxyadenosine, whereupon the 5'-deoxyribose moiety of 5'-deoxyinosine is further metabolized to deoxyhexoses used for the biosynthesis of aromatic amino acids in methanogens. The chain is 5'-deoxyadenosine deaminase from Methanothrix thermoacetophila (strain DSM 6194 / JCM 14653 / NBRC 101360 / PT) (Methanosaeta thermophila).